A 360-amino-acid chain; its full sequence is Isocitrate dehydrogenase [NAD] regulatory subunit B, mitochondrial (360 aa).

The transit peptide at 1–113 (MLGRLRTVVK…MELRKALDLY (113 aa)) directs the protein to the mitochondrion. Substrate is bound by residues Ser101, Asn103, Arg107, and Arg140. Residue Asp227 participates in Mg(2+) binding. Residues 284 to 290 (HHVAADI) and Asn297 contribute to the NADP(+) site.

It belongs to the isocitrate and isopropylmalate dehydrogenases family. As to quaternary structure, heterooligomer of catalytic and regulatory subunits. Mg(2+) is required as a cofactor. Requires Mn(2+) as cofactor.

It localises to the mitochondrion. It catalyses the reaction D-threo-isocitrate + NAD(+) = 2-oxoglutarate + CO2 + NADH. Functionally, performs an essential role in the oxidative function of the citric acid cycle. The polypeptide is Isocitrate dehydrogenase [NAD] regulatory subunit B, mitochondrial (idhB) (Dictyostelium discoideum (Social amoeba)).